We begin with the raw amino-acid sequence, 361 residues long: MKPTLRRKLEALAERHEELERLLSDPKIASDTDRFRTYSRELAQLAPIATTLAEETRTKADLAAAETLRTDPEMRELAEQEIAIAQAHLTTLDEQLQRLLIPQDPRDECNLFLEVRAGTGGDEAAIFAGNLFRMYTRYAERQRWKVEVESDTPGEHGGYKEIIARIVGRGAYSRLKFESGTHRVQRVPATESQGRIHTSAATVAIIPEADEIADISINPADLKIDTFRSSGAGGQHVNKTESAIRITHLPTGVVVESQTERSQHANRDKAMKRLKAQLIESQRSQQATAEAMTRKLQVGSGDRSQRIRTYNFPQGRITDHRVENLTLYDLPNIIEGDLDPLIDRLRQEHQAEELARLSNAP.

Gln-235 bears the N5-methylglutamine mark. The segment at 283–306 (RSQQATAEAMTRKLQVGSGDRSQR) is disordered.

It belongs to the prokaryotic/mitochondrial release factor family. Post-translationally, methylated by PrmC. Methylation increases the termination efficiency of RF1.

It is found in the cytoplasm. Functionally, peptide chain release factor 1 directs the termination of translation in response to the peptide chain termination codons UAG and UAA. In Xylella fastidiosa (strain M23), this protein is Peptide chain release factor 1.